Consider the following 630-residue polypeptide: Sodium-dependent serotonin transporter (630 aa).

The Cytoplasmic portion of the chain corresponds to 1–87 (METTPLNSQK…ERETWGKKVD (87 aa)). Residues 31–59 (VPTPGDKVESGQISNGYSAVPSPGAGDDT) are disordered. Tyr-47 carries the post-translational modification Phosphotyrosine. Residues 88-112 (FLLSVIGYAVDLGNVWRFPYICYQN) form a helical membrane-spanning segment. Residues Gly-94, Ala-96, Val-97, Asp-98, and Asn-101 each coordinate Na(+). Asp-98 provides a ligand contact to serotonin. Over 113-115 (GGG) the chain is Extracellular. A helical membrane pass occupies residues 116-135 (AFLIPYTIMAIFGGIPLFYM). Topologically, residues 136 to 160 (ELALGQYHRNGCISIWRKICPIFKG) are cytoplasmic. Tyr-142 is modified (phosphotyrosine). A helical transmembrane segment spans residues 161–186 (IGYAICIIAFYIASYYNTIMAWALYY). The Extracellular portion of the chain corresponds to 187–252 (LISSFTDQLP…KGLQDLGGIS (66 aa)). A disulfide bridge connects residues Cys-200 and Cys-209. N-linked (GlcNAc...) asparagine glycosylation is found at Asn-208 and Asn-217. A helical membrane pass occupies residues 253 to 271 (WQLALCIMLIFTVIYFSIW). Over 272–277 (KGVKTS) the chain is Cytoplasmic. Thr-276 is subject to Phosphothreonine. A helical membrane pass occupies residues 278-297 (GKVVWVTATFPYIILSVLLV). The Extracellular portion of the chain corresponds to 298 to 324 (RGATLPGAWRGVLFYLKPNWQKLLETG). The helical transmembrane segment at 325–347 (VWIDAAAQIFFSLGPGFGVLLAF) threads the bilayer. Ser-336 serves as a coordination point for Na(+). At 348–360 (ASYNKFNNNCYQD) the chain is on the cytoplasmic side. The helical transmembrane segment at 361–380 (ALVTSVVNCMTSFVSGFVIF) threads the bilayer. Asn-368 serves as a coordination point for Na(+). Residues 381–421 (TVLGYMAEMRNEDVSEVAKDAGPSLLFITYAEAIANMPAST) lie on the Extracellular side of the membrane. The helical transmembrane segment at 422-443 (FFAIIFFLMLITLGLDSTFAGL) threads the bilayer. Na(+)-binding residues include Leu-434, Asp-437, and Ser-438. Thr-439 provides a ligand contact to serotonin. Topologically, residues 444–463 (EGVITAVLDEFPHIWAKRRE) are cytoplasmic. A helical transmembrane segment spans residues 464–483 (WFVLAVVITCFFGSLVTLTF). The Extracellular segment spans residues 484–494 (GGAYVVKLLEE). Residues Glu-494 and Tyr-495 each coordinate serotonin. The chain crosses the membrane as a helical span at residues 495–516 (YATGPAVLTVALIEAVAVSWFY). The Cytoplasmic segment spans residues 517-538 (GITQFCRDVKEMLGFSPGWFWR). A helical membrane pass occupies residues 539–558 (ICWVAISPLFLLFIICSFLM). Residues Phe-556 and Ser-559 each contribute to the serotonin site. Topologically, residues 559-574 (SPPQLRLFQYNYPHWS) are extracellular. A helical transmembrane segment spans residues 575–595 (IILGYCIGTSSFVCIPTYIAY). Residues 596 to 630 (RLISTPGTFKERIIKSITPETPTEIPCGDVRLNAV) are Cytoplasmic-facing. Residues 616-624 (TPTEIPCGD) are interaction with RAB4A.

It belongs to the sodium:neurotransmitter symporter (SNF) (TC 2.A.22) family. SLC6A4 subfamily. Monomer or homooligomer. Interacts (via C-terminus) with SCAMP2; the interaction is direct and retains transporter molecules intracellularly. Interacts with filamentous actin and STX1A. Interacts (via the N-terminus) with STX1A (via the H3 domain); this interaction regulates SLC4A6 channel conductance. Interacts with SEC23A, SEC24C and PATJ. Interacts with NOS1; the interaction may diminish the cell surface localization of SERT in the brain and, correspondingly, reduce serotonin reuptake. Interacts with TGFB1I1. Interacts with ITGAV:ITGB3. Interacts (via C-terminus) with ITGB3; this interaction regulates SLC6A4 trafficking. Post-translationally, phosphorylation at Thr-276 increases 5-HT uptake and is required for cGMP-mediated SERT regulation.

Its subcellular location is the cell membrane. It localises to the endomembrane system. It is found in the endosome membrane. The protein localises to the synapse. The protein resides in the cell junction. Its subcellular location is the focal adhesion. It localises to the cell projection. It is found in the neuron projection. It carries out the reaction serotonin(out) + K(+)(in) + Na(+)(out) + H(+)(in) = serotonin(in) + K(+)(out) + Na(+)(in) + H(+)(out). Its function is as follows. Serotonin transporter that cotransports serotonin with one Na(+) ion in exchange for one K(+) ion and possibly one proton in an overall electroneutral transport cycle. Transports serotonin across the plasma membrane from the extracellular compartment to the cytosol thus limiting serotonin intercellular signaling. Essential for serotonin homeostasis in the central nervous system. In the developing somatosensory cortex, acts in glutamatergic neurons to control serotonin uptake and its trophic functions accounting for proper spatial organization of cortical neurons and elaboration of sensory circuits. In the mature cortex, acts primarily in brainstem raphe neurons to mediate serotonin uptake from the synaptic cleft back into the pre-synaptic terminal thus terminating serotonin signaling at the synapse. Modulates mucosal serotonin levels in the gastrointestinal tract through uptake and clearance of serotonin in enterocytes. Required for enteric neurogenesis and gastrointestinal reflexes. Regulates blood serotonin levels by ensuring rapid high affinity uptake of serotonin from plasma to platelets, where it is further stored in dense granules via vesicular monoamine transporters and then released upon stimulation. Mechanistically, the transport cycle starts with an outward-open conformation having Na1(+) and Cl(-) sites occupied. The binding of a second extracellular Na2(+) ion and serotonin substrate leads to structural changes to outward-occluded to inward-occluded to inward-open, where the Na2(+) ion and serotonin are released into the cytosol. Binding of intracellular K(+) ion induces conformational transitions to inward-occluded to outward-open and completes the cycle by releasing K(+) possibly together with a proton bound to Asp-98 into the extracellular compartment. Na1(+) and Cl(-) ions remain bound throughout the transport cycle. Additionally, displays serotonin-induced channel-like conductance for monovalent cations, mainly Na(+) ions. The channel activity is uncoupled from the transport cycle and may contribute to the membrane resting potential or excitability. In Macaca mulatta (Rhesus macaque), this protein is Sodium-dependent serotonin transporter (SLC6A4).